The chain runs to 235 residues: Phosphoribosylaminoimidazole-succinocarboxamide synthase (235 aa).

Belongs to the SAICAR synthetase family.

The enzyme catalyses 5-amino-1-(5-phospho-D-ribosyl)imidazole-4-carboxylate + L-aspartate + ATP = (2S)-2-[5-amino-1-(5-phospho-beta-D-ribosyl)imidazole-4-carboxamido]succinate + ADP + phosphate + 2 H(+). It participates in purine metabolism; IMP biosynthesis via de novo pathway; 5-amino-1-(5-phospho-D-ribosyl)imidazole-4-carboxamide from 5-amino-1-(5-phospho-D-ribosyl)imidazole-4-carboxylate: step 1/2. The sequence is that of Phosphoribosylaminoimidazole-succinocarboxamide synthase from Clostridium kluyveri (strain NBRC 12016).